The chain runs to 344 residues: Protein RecA (344 aa).

65–72 contacts ATP; it reads GPESSGKT.

The protein belongs to the RecA family.

It localises to the cytoplasm. Functionally, can catalyze the hydrolysis of ATP in the presence of single-stranded DNA, the ATP-dependent uptake of single-stranded DNA by duplex DNA, and the ATP-dependent hybridization of homologous single-stranded DNAs. It interacts with LexA causing its activation and leading to its autocatalytic cleavage. The chain is Protein RecA from Rubrobacter xylanophilus (strain DSM 9941 / JCM 11954 / NBRC 16129 / PRD-1).